We begin with the raw amino-acid sequence, 485 residues long: tRNA-2-methylthio-N(6)-dimethylallyladenosine synthase (485 aa).

The 118-residue stretch at 37 to 154 (GKLYIKTHGC…LPELIRARRE (118 aa)) folds into the MTTase N-terminal domain. [4Fe-4S] cluster contacts are provided by Cys-46, Cys-83, Cys-117, Cys-191, Cys-195, and Cys-198. In terms of domain architecture, Radical SAM core spans 177–416 (RADGPSAFVS…HINAHAAGIS (240 aa)). The region spanning 417-480 (QRMVGSVQRV…SNSLRGRIQL (64 aa)) is the TRAM domain.

It belongs to the methylthiotransferase family. MiaB subfamily. As to quaternary structure, monomer. It depends on [4Fe-4S] cluster as a cofactor.

Its subcellular location is the cytoplasm. It catalyses the reaction N(6)-dimethylallyladenosine(37) in tRNA + (sulfur carrier)-SH + AH2 + 2 S-adenosyl-L-methionine = 2-methylsulfanyl-N(6)-dimethylallyladenosine(37) in tRNA + (sulfur carrier)-H + 5'-deoxyadenosine + L-methionine + A + S-adenosyl-L-homocysteine + 2 H(+). Functionally, catalyzes the methylthiolation of N6-(dimethylallyl)adenosine (i(6)A), leading to the formation of 2-methylthio-N6-(dimethylallyl)adenosine (ms(2)i(6)A) at position 37 in tRNAs that read codons beginning with uridine. This chain is tRNA-2-methylthio-N(6)-dimethylallyladenosine synthase, found in Xanthomonas campestris pv. campestris (strain 8004).